The sequence spans 344 residues: Aurora kinase B (344 aa).

Residues M1–S22 form a disordered region. A Phosphothreonine modification is found at T35. S62 bears the Phosphoserine mark. T64 bears the Phosphothreonine mark. Positions F77 to V327 constitute a Protein kinase domain. ATP is bound by residues L83–V91 and K106. Residue D200 is the Proton acceptor of the active site. K215 is modified (N6-acetyllysine). A Phosphoserine modification is found at S227. A Phosphothreonine; by autocatalysis modification is found at T232.

It belongs to the protein kinase superfamily. Ser/Thr protein kinase family. Aurora subfamily. In terms of assembly, component of the chromosomal passenger complex (CPC) composed of at least BIRC5/survivin, CDCA8/borealin, INCENP, AURKB or AURKC; predominantly independent AURKB- and AURKC-containing complexes exist. Associates with RACGAP1 during M phase. Interacts with SPDYC; this interaction may be required for proper localization of active, Thr-232-phosphorylated AURKB form during prometaphase and metaphase. Interacts with p53/TP53. Interacts (via the middle kinase domain) with NOC2L (via the N- and C-terminus domains). Interacts with CDCA1. Interacts with EVI5. Interacts with JTB. Interacts with NDC80. Interacts with PSMA3. Interacts with RNF2/RING1B. Interacts with SEPTIN1. Interacts with SIRT2. Interacts with TACC1. Interacts with TTC28. The phosphorylation of Thr-232 requires the binding to INCENP and occurs by means of an autophosphorylation mechanism. Thr-232 phosphorylation is indispensable for the AURKB kinase activity. Post-translationally, acetylated at Lys-215 by KAT5 at kinetochores, increasing AURKB activity and promoting accurate chromosome segregation in mitosis. In terms of processing, ubiquitinated by different BCR (BTB-CUL3-RBX1) E3 ubiquitin ligase complexes. Ubiquitinated by the BCR(KLHL9-KLHL13) E3 ubiquitin ligase complex, ubiquitination leads to removal from mitotic chromosomes and is required for cytokinesis. During anaphase, the BCR(KLHL21) E3 ubiquitin ligase complex recruits the CPC complex from chromosomes to the spindle midzone and mediates the ubiquitination of AURKB. Ubiquitination of AURKB by BCR(KLHL21) E3 ubiquitin ligase complex may not lead to its degradation by the proteasome. Deubiquitinated by USP35; inhibiting CDH1-mediated degradation of AURKB. In terms of tissue distribution, high level expression seen in the thymus. It is also expressed in the spleen, lung, testis, colon, placenta and fetal liver. Expressed during S and G2/M phase and expression is up-regulated in cancer cells during M phase. Not expressed in normal liver, high expression in metastatic liver.

The protein resides in the nucleus. It localises to the chromosome. The protein localises to the centromere. Its subcellular location is the kinetochore. It is found in the cytoplasm. The protein resides in the cytoskeleton. It localises to the spindle. The protein localises to the midbody. It carries out the reaction L-seryl-[protein] + ATP = O-phospho-L-seryl-[protein] + ADP + H(+). The enzyme catalyses L-threonyl-[protein] + ATP = O-phospho-L-threonyl-[protein] + ADP + H(+). Its activity is regulated as follows. Activity is greatly increased when AURKB is within the CPC complex. In particular, AURKB-phosphorylated INCENP acts as an activator of AURKB. Positive feedback between HASPIN and AURKB contributes to CPC localization. Inhibited by ZM447439. Functionally, serine/threonine-protein kinase component of the chromosomal passenger complex (CPC), a complex that acts as a key regulator of mitosis. The CPC complex has essential functions at the centromere in ensuring correct chromosome alignment and segregation and is required for chromatin-induced microtubule stabilization and spindle assembly. Involved in the bipolar attachment of spindle microtubules to kinetochores and is a key regulator for the onset of cytokinesis during mitosis. Required for central/midzone spindle assembly and cleavage furrow formation. Key component of the cytokinesis checkpoint, a process required to delay abscission to prevent both premature resolution of intercellular chromosome bridges and accumulation of DNA damage: phosphorylates CHMP4C, leading to retain abscission-competent VPS4 (VPS4A and/or VPS4B) at the midbody ring until abscission checkpoint signaling is terminated at late cytokinesis. AURKB phosphorylates the CPC complex subunits BIRC5/survivin, CDCA8/borealin and INCENP. Phosphorylation of INCENP leads to increased AURKB activity. Other known AURKB substrates involved in centromeric functions and mitosis are CENPA, DES/desmin, GPAF, KIF2C, NSUN2, RACGAP1, SEPTIN1, VIM/vimentin, HASPIN, and histone H3. A positive feedback loop involving HASPIN and AURKB contributes to localization of CPC to centromeres. Phosphorylation of VIM controls vimentin filament segregation in cytokinetic process, whereas histone H3 is phosphorylated at 'Ser-10' and 'Ser-28' during mitosis (H3S10ph and H3S28ph, respectively). AURKB is also required for kinetochore localization of BUB1 and SGO1. Phosphorylation of p53/TP53 negatively regulates its transcriptional activity. Key regulator of active promoters in resting B- and T-lymphocytes: acts by mediating phosphorylation of H3S28ph at active promoters in resting B-cells, inhibiting RNF2/RING1B-mediated ubiquitination of histone H2A and enhancing binding and activity of the USP16 deubiquitinase at transcribed genes. Acts as an inhibitor of CGAS during mitosis: catalyzes phosphorylation of the N-terminus of CGAS during the G2-M transition, blocking CGAS liquid phase separation and activation, and thereby preventing CGAS-induced autoimmunity. Phosphorylates KRT5 during anaphase and telophase. Phosphorylates ATXN10 which promotes phosphorylation of ATXN10 by PLK1 and may play a role in the regulation of cytokinesis and stimulating the proteasomal degradation of ATXN10. This is Aurora kinase B (AURKB) from Homo sapiens (Human).